The chain runs to 423 residues: Putative transmembrane protein ORF103 (423 aa).

Basic and acidic residues predominate over residues 43–57 (EPKIEQEEPQQKPEV). The interval 43-91 (EPKIEQEEPQQKPEVVDVYSNETDKNEEEVSIITSEDEEEDEKGMLFKR) is disordered. A compositionally biased stretch (acidic residues) spans 67 to 84 (KNEEEVSIITSEDEEEDE). 2 helical membrane passes run 125–145 (IIGI…VAVL) and 162–182 (FSLC…GLAI). Positions 253-282 (DESGSEVSSEDEESDQETLLRNRKMPTNSK) are disordered. The next 2 helical transmembrane spans lie at 326–346 (LISA…IVGS) and 366–386 (IPTL…MCVL).

Its subcellular location is the host membrane. This Magallana gigas (Pacific oyster) protein is Putative transmembrane protein ORF103.